The chain runs to 1136 residues: MKKAWAQLERVLQPSSSRVNRALITQQLEALYALPINCEAACRWEDAQRLFLRCNGHRPYYAGIMDQSTDNRLAVASFEENMLALQQRGLVCTTVGDKAPPCVVGGQTSRGLCRRSSIVCVNVGSCADLDLNMHEDCDETLLTLLHGVVVPYLHFRIVYGTGVSPPLVPRAPGPAICGASHDLSLQNELHMDSCVALLHPRGLCSSNCNNKAYRTAATLVRGAVSLATSDTLLHQRQDGCFTLHPDAMKLGSPRLFALQLWWNKEVGPVIQRGVEQSVKTDEVLSGAWIEVARKRVEELVERGGDDLPQPLRNMTRDDVAAFAADATLCWTLSAFDCNYKRLGPAQPACRLQFSEEARLSMALELMQTVKASLVKQPTGIPISELSATVCWPAASAWIGEKSLTEALTQFPAHFNVVNVEGKLVVMHGHLTGPSDNVTAEEVSEWLAAGHSEGLQKPCVAASPSDLTFHRETDLVVRAVAFLRKRHFGNVPVTYGELCGALLPKNNGKNDGDSDTLLNVLLRYDVLAADTAKGDSSINIQCGLRDGDAIRLSVREDRALRALEAFRTTSRSAFQLYTEAIEPFLTCCRGAMRENGSCVVPLTLLERWLQVERLSLQSKELLDILRSAEGPYRIDEELCNVVLTNHTAKGEVLTPAFSLPATPPPPPPPAVSSRLTFEAQISRVLKTQRPDRLLHFVQTILHAVFDLILPHVSAPSGVPVRMLMRRIRWGSFVVTLGSLTSFVEAFDGLFFEVLSNASSHGEEKRDDVDLIVSAYKGPVSPWLLYARLIVRLFPADVDIPLGLIAEALSWSSRFAPMFGDLPSLLRRVGRQCRNGQLLAKVEMVRPVCDQDDACLWELLAKIRREAHLHHLERSSGETGQYVLLSETELYAYLPNDVKGERWNSTVKEEGARCLATMAVHRLPHFFEWHVDNTDTTTRYVRVVLPFSTPPTGVVCFVEEYVCPLLRQHKQTTIAELDEQLGWSHGAFDAHPAGSQAAGGTPSATSLCGLLRRYVESMHSPKIILEPQETTLSPLHHHVHVMPNSAVYTSPEDMLLLLNGLRISNEGITRVLPTHKPVSLFELISQQLDLHQPFREGLTTLERGSRWNVMLACESDSMDDCLQELDNCTGDILVWCEG.

The N-terminal 97 residues, 1–97 (MKKAWAQLER…RGLVCTTVGD (97 aa)), are a transit peptide targeting the mitochondrion.

As to quaternary structure, component of the mitochondrial 3' processome (MPsome) complex composed at least of terminal uridylyltransferase KRET1/TUT1, 3'-5' exonuclease DSS1, MPSS1, MPSS2 and MPSS3. Within the complex, interacts with KRET1.

The protein localises to the mitochondrion. Functionally, as part of the mitochondrial 3' processome (MPsome), involved in the maturation of guided RNA (gRNA) precursors. The chain is Mitochondrial 3' processome subunit 3 from Trypanosoma brucei brucei.